Here is a 1783-residue protein sequence, read N- to C-terminus: Collagen alpha-1(XXVII) chain A (1783 aa).

The N-terminal stretch at 1–35 is a signal peptide; sequence MNLATRRRVRRTSRLVAKRALLLCILLYCTSFGFT. Positions 73–235 constitute a Laminin G-like domain; it reads TTRARVTTPT…NICSAIRRQC (163 aa). Disordered stretches follow at residues 288–312, 327–524, 553–744, 772–1461, and 1512–1546; these read SSSV…LALM, HKPS…PRTP, VGAP…APGP, PGNM…GDIG, and GNPG…LPGP. A compositionally biased stretch (low complexity) spans 403–415; it reads KPTSVPKPNPTKN. Residues 436-447 show a composition bias toward pro residues; that stretch reads LPAPKPTVPKRP. The segment covering 462 to 494 has biased composition (polar residues); sequence HTTPLTPKSTLAPNSTSKKPLPTLKSTSFTTAA. The triple-helical region stretch occupies residues 553-1547; the sequence is VGAPGLKGDQ…RGPPGLPGPP (995 aa). A Collagen-like 1 domain is found at 554-608; the sequence is GAPGLKGDQGESGLPGPPGKPGQPGMRGPRGPPGPHGKPGRPGPTGLKGKKGDPG. Low complexity-rich tracts occupy residues 622-633, 651-661, 735-744, 817-829, and 861-870; these read VGLPGPVGLVGV, EPGEQGPVGEA, EPGVIGAPGP, PGPQ…IGPS, and ARGLPGPRGA. Collagen-like domains are found at residues 818 to 873 and 845 to 902; these read GPQG…AAGR and GKPG…GALG. A compositionally biased stretch (gly residues) spans 926–935; it reads GFIGPGGEAG. The span at 967–976 shows a compositional bias: pro residues; that stretch reads GGPPGPPGSP. Low complexity-rich tracts occupy residues 978–988 and 1098–1129; these read SPGSRGPIGIR and SIGL…AGPD. Residues 986–1043 form the Collagen-like 4 domain; it reads GIRGPKGRRGPRGPDGVPGEIGTEGKKGPDGPPGKIGFPGHAGKIGESGEVGPKGFPG. 3 stretches are compositionally biased toward basic and acidic residues: residues 1131–1158, 1170–1182, and 1257–1267; these read TKGE…KDGP, PEGK…ERGK, and AKGEQGDDGKV. A Collagen-like 5 domain is found at 1269–1326; it reads GPTGAPGLRGPVGKRGDRGEPGDPGYVGQQGVDGLRGKPGAPGLPGDPGPRGTQGPKG. Composition is skewed to low complexity over residues 1334-1349 and 1396-1409; these read KGKQ…RGSP and LPGK…VGVI. 2 consecutive Collagen-like domains span residues 1446–1503 and 1497–1549; these read GPQG…GLAG and GRGG…PPGI. Positions 1537–1546 are enriched in pro residues; it reads PRGPPGLPGP. Positions 1551–1783 are cleaved as a propeptide — C-terminal propeptide; sequence LAMNQDFGLG…HLEVGPVCFL (233 aa). The Fibrillar collagen NC1 domain maps to 1589-1783; sequence PEILRTLDYL…HLEVGPVCFL (195 aa). Cystine bridges form between Cys-1619–Cys-1651, Cys-1660–Cys-1781, and Cys-1696–Cys-1734. Residues Asp-1637, Asn-1639, Cys-1642, and Asp-1645 each contribute to the Ca(2+) site. An N-linked (GlcNAc...) asparagine glycan is attached at Asn-1698.

Belongs to the fibrillar collagen family. In terms of tissue distribution, expressed dynamically in the notochord from late epiboly, spreading to the anterior notochord by 24 hpf, and then throughout the notochord by 30 hpf. Subsequently, notochordal expression becomes restricted to the distal tip of the tail by 48 hpf and is no longer detectable by 72 hpf. Also expressed throughout the floor plate and hypochord at 24 hpf, and in forming head cartilages and the first forming tooth.

The protein localises to the secreted. It localises to the extracellular space. Its subcellular location is the extracellular matrix. In terms of biological role, may play a role during the calcification of cartilage and the transition of cartilage to bone. Together with col27a1b, plays a role in development of the notochord and axial skeleton. The polypeptide is Collagen alpha-1(XXVII) chain A (Danio rerio (Zebrafish)).